We begin with the raw amino-acid sequence, 309 residues long: Glutaminase (309 aa).

Positions 64, 114, 160, 167, 191, 243, and 261 each coordinate substrate.

The protein belongs to the glutaminase family. In terms of assembly, homotetramer.

It carries out the reaction L-glutamine + H2O = L-glutamate + NH4(+). The chain is Glutaminase from Methylobacterium sp. (strain 4-46).